We begin with the raw amino-acid sequence, 301 residues long: Formylmethanofuran--tetrahydromethanopterin formyltransferase-like protein (301 aa).

This sequence belongs to the FTR family.

In Archaeoglobus fulgidus (strain ATCC 49558 / DSM 4304 / JCM 9628 / NBRC 100126 / VC-16), this protein is Formylmethanofuran--tetrahydromethanopterin formyltransferase-like protein.